Here is a 232-residue protein sequence, read N- to C-terminus: 2,3,4,5-tetrahydropyridine-2,6-dicarboxylate N-acetyltransferase (232 aa).

Belongs to the transferase hexapeptide repeat family. DapH subfamily.

The enzyme catalyses (S)-2,3,4,5-tetrahydrodipicolinate + acetyl-CoA + H2O = L-2-acetamido-6-oxoheptanedioate + CoA. It functions in the pathway amino-acid biosynthesis; L-lysine biosynthesis via DAP pathway; LL-2,6-diaminopimelate from (S)-tetrahydrodipicolinate (acetylase route): step 1/3. Functionally, catalyzes the transfer of an acetyl group from acetyl-CoA to tetrahydrodipicolinate. The sequence is that of 2,3,4,5-tetrahydropyridine-2,6-dicarboxylate N-acetyltransferase from Streptococcus pneumoniae (strain Taiwan19F-14).